A 184-amino-acid polypeptide reads, in one-letter code: Nucleoporin-62 C-terminal-like protein (184 aa).

The stretch at 117-151 (RILHGEVNKVKLDQKRLEQELDFILSQQQELEFLL) forms a coiled coil.

This sequence belongs to the nucleoporin NSP1/NUP62 family.

This chain is Nucleoporin-62 C-terminal-like protein (NUP62CL), found in Homo sapiens (Human).